We begin with the raw amino-acid sequence, 469 residues long: Argininosuccinate lyase (469 aa).

The protein belongs to the lyase 1 family. Argininosuccinate lyase subfamily.

It is found in the cytoplasm. It carries out the reaction 2-(N(omega)-L-arginino)succinate = fumarate + L-arginine. The protein operates within amino-acid biosynthesis; L-arginine biosynthesis; L-arginine from L-ornithine and carbamoyl phosphate: step 3/3. The sequence is that of Argininosuccinate lyase from Burkholderia cenocepacia (strain HI2424).